Reading from the N-terminus, the 172-residue chain is Shikimate kinase (172 aa).

Residue 11-16 (ASGKTE) participates in ATP binding. Mg(2+) is bound at residue Thr-15. Substrate is bound by residues Asp-33, Arg-57, and Gly-80. Arg-120 is a binding site for ATP. Position 142 (Arg-142) interacts with substrate.

The protein belongs to the shikimate kinase family. Monomer. Mg(2+) is required as a cofactor.

The protein resides in the cytoplasm. The catalysed reaction is shikimate + ATP = 3-phosphoshikimate + ADP + H(+). The protein operates within metabolic intermediate biosynthesis; chorismate biosynthesis; chorismate from D-erythrose 4-phosphate and phosphoenolpyruvate: step 5/7. Catalyzes the specific phosphorylation of the 3-hydroxyl group of shikimic acid using ATP as a cosubstrate. In Flavobacterium psychrophilum (strain ATCC 49511 / DSM 21280 / CIP 103535 / JIP02/86), this protein is Shikimate kinase.